A 245-amino-acid polypeptide reads, in one-letter code: Ribonuclease 3 (245 aa).

The 130-residue stretch at 19–148 folds into the RNase III domain; it reads FKVFQEKIGI…FIGALYLDQG (130 aa). Glu61 serves as a coordination point for Mg(2+). Asp65 is a catalytic residue. Mg(2+) is bound by residues Asp134 and Glu137. Glu137 is an active-site residue. The region spanning 174–243 is the DRBM domain; sequence DYKSQLQELI…AAEALKKLKE (70 aa).

The protein belongs to the ribonuclease III family. In terms of assembly, homodimer. Mg(2+) is required as a cofactor.

Its subcellular location is the cytoplasm. It carries out the reaction Endonucleolytic cleavage to 5'-phosphomonoester.. Functionally, digests double-stranded RNA. Involved in the processing of primary rRNA transcript to yield the immediate precursors to the large and small rRNAs (23S and 16S). Processes some mRNAs, and tRNAs when they are encoded in the rRNA operon. Processes pre-crRNA and tracrRNA of type II CRISPR loci if present in the organism. This is Ribonuclease 3 from Bacillus cereus (strain ATCC 14579 / DSM 31 / CCUG 7414 / JCM 2152 / NBRC 15305 / NCIMB 9373 / NCTC 2599 / NRRL B-3711).